The chain runs to 106 residues: U1-lycotoxin-Ls1z (106 aa).

An N-terminal signal peptide occupies residues 1 to 19 (MKVLVVVALLVTLISYSSS). A propeptide spanning residues 20 to 40 (EGIDDLEADELLSLMANEQTR) is cleaved from the precursor. 4 cysteine pairs are disulfide-bonded: C43-C58, C50-C67, C57-C85, and C69-C83.

The protein belongs to the neurotoxin 19 (CSTX) family. 03 subfamily. As to expression, expressed by the venom gland.

Its subcellular location is the secreted. This chain is U1-lycotoxin-Ls1z, found in Lycosa singoriensis (Wolf spider).